The chain runs to 473 residues: Trehalose-6-phosphate synthase (473 aa).

R10 provides a ligand contact to D-glucose 6-phosphate. Position 21-22 (21-22 (GG)) interacts with UDP-alpha-D-glucose. Y76 and D130 together coordinate D-glucose 6-phosphate. UDP-alpha-D-glucose contacts are provided by R262 and K267. R300 is a D-glucose 6-phosphate binding site. UDP-alpha-D-glucose is bound by residues F339 and 365 to 369 (LVAKE).

The protein belongs to the glycosyltransferase 20 family. Homotetramer.

It catalyses the reaction D-glucose 6-phosphate + UDP-alpha-D-glucose = alpha,alpha-trehalose 6-phosphate + UDP + H(+). The protein operates within glycan biosynthesis; trehalose biosynthesis. In terms of biological role, probably involved in the osmoprotection via the biosynthesis of trehalose. Catalyzes the transfer of glucose from UDP-alpha-D-glucose (UDP-Glc) to D-glucose 6-phosphate (Glc-6-P) to form trehalose-6-phosphate. Acts with retention of the anomeric configuration of the UDP-sugar donor. This chain is Trehalose-6-phosphate synthase (otsA), found in Salmonella arizonae (strain ATCC BAA-731 / CDC346-86 / RSK2980).